Consider the following 942-residue polypeptide: Envelope glycoprotein (942 aa).

Positions 1-80 (MDAGASYMRL…LLWTNMCVRA (80 aa)) are cleaved as a signal peptide. 23 N-linked (GlcNAc...) asparagine; by host glycosylation sites follow: N51, N98, N131, N176, N228, N331, N348, N354, N370, N379, N400, N404, N435, N441, N447, N457, N467, N481, N493, N503, N509, N527, and N534. Topologically, residues 81–799 (EDYITLISDP…SLKEVFDWSG (719 aa)) are extracellular. The segment at 631-651 (GVGLVIMLVIMAIVAAAGASL) is fusion peptide. 2 coiled-coil regions span residues 663-713 (KAAV…RIML) and 754-789 (RELQGYDGNLTMLLRESARQTQLAEEQVRRIPDVWE). The tract at residues 697 to 713 (LEARVARVEAITDRIML) is immunosuppression. The chain crosses the membrane as a helical span at residues 800–820 (WFSWLKYIPIIVVGLVGCILI). Over 821–942 (RAVICVCQPL…VDCETWGKGD (122 aa)) the chain is Cytoplasmic.

The mature envelope protein (Env) consists of a trimer of SU-TM heterodimers attached by noncovalent interactions or by a labile interchain disulfide bond. Specific enzymatic cleavages in vivo yield mature proteins. Envelope glycoproteins are synthesized as an inactive precursor that is N-glycosylated and processed likely by host cell furin or by a furin-like protease in the Golgi to yield the mature SU and TM proteins. The cleavage site between SU and TM requires the minimal sequence [KR]-X-[KR]-R.

It localises to the virion membrane. It is found in the host cell membrane. The surface protein (SU) attaches the virus to the host cell by binding to its receptor. This interaction triggers the refolding of the transmembrane protein (TM) and is thought to activate its fusogenic potential by unmasking its fusion peptide. Fusion occurs at the host cell plasma membrane. In terms of biological role, the transmembrane protein (TM) acts as a class I viral fusion protein. Under the current model, the protein has at least 3 conformational states: pre-fusion native state, pre-hairpin intermediate state, and post-fusion hairpin state. During viral and target cell membrane fusion, the coiled coil regions (heptad repeats) assume a trimer-of-hairpins structure, positioning the fusion peptide in close proximity to the C-terminal region of the ectodomain. The formation of this structure appears to drive apposition and subsequent fusion of viral and target cell membranes. Membranes fusion leads to delivery of the nucleocapsid into the cytoplasm. The sequence is that of Envelope glycoprotein (env) from Caprine arthritis encephalitis virus (strain 63) (CAEV-63).